The chain runs to 110 residues: UPF0060 membrane protein Dtpsy_1668 (110 aa).

4 consecutive transmembrane segments (helical) span residues 7 to 27 (LALFLLTAVAEIVGCYLPWLW), 33 to 53 (SAWLLVPAAASLALFAWLLTL), 63 to 83 (AAYGGVYVAVALVWLWTVDGV), and 86 to 106 (GPWDWLGVSVTLCGMAIIAFA).

It belongs to the UPF0060 family.

The protein localises to the cell inner membrane. This chain is UPF0060 membrane protein Dtpsy_1668, found in Acidovorax ebreus (strain TPSY) (Diaphorobacter sp. (strain TPSY)).